Consider the following 777-residue polypeptide: Ribosome-releasing factor 2, mitochondrial (777 aa).

A tr-type G domain is found at 68–353 (AKIRNIGIMA…AVTMYLPSPE (286 aa)). GTP contacts are provided by residues 77–84 (AHIDAGKT), 141–145 (DTPGH), and 195–198 (NKMD).

It belongs to the TRAFAC class translation factor GTPase superfamily. Classic translation factor GTPase family. EF-G/EF-2 subfamily.

The protein localises to the mitochondrion. It catalyses the reaction GTP + H2O = GDP + phosphate + H(+). Functionally, mitochondrial GTPase that mediates the disassembly of ribosomes from messenger RNA at the termination of mitochondrial protein biosynthesis. Acts in collaboration with MRRF. GTP hydrolysis follows the ribosome disassembly and probably occurs on the ribosome large subunit. Not involved in the GTP-dependent ribosomal translocation step during translation elongation. The sequence is that of Ribosome-releasing factor 2, mitochondrial from Pongo abelii (Sumatran orangutan).